The following is a 222-amino-acid chain: Large ribosomal subunit protein bL20 (222 aa).

Belongs to the bacterial ribosomal protein bL20 family.

Binds directly to 23S ribosomal RNA and is necessary for the in vitro assembly process of the 50S ribosomal subunit. It is not involved in the protein synthesizing functions of that subunit. The sequence is that of Large ribosomal subunit protein bL20 (rplT) from Paenarthrobacter aurescens (strain TC1).